The sequence spans 283 residues: Acetylglutamate kinase (283 aa).

Residues 64-65, Arg86, and Asn178 contribute to the substrate site; that span reads GG.

Belongs to the acetylglutamate kinase family. ArgB subfamily.

It localises to the cytoplasm. It carries out the reaction N-acetyl-L-glutamate + ATP = N-acetyl-L-glutamyl 5-phosphate + ADP. It participates in amino-acid biosynthesis; L-arginine biosynthesis; N(2)-acetyl-L-ornithine from L-glutamate: step 2/4. In terms of biological role, catalyzes the ATP-dependent phosphorylation of N-acetyl-L-glutamate. The chain is Acetylglutamate kinase from Lactococcus lactis subsp. cremoris (strain MG1363).